Here is a 402-residue protein sequence, read N- to C-terminus: S-adenosylmethionine synthase (402 aa).

Histidine 17 is an ATP binding site. Aspartate 19 serves as a coordination point for Mg(2+). Position 45 (glutamate 45) interacts with K(+). L-methionine contacts are provided by glutamate 58 and glutamine 101. The tract at residues 101–111 (QSSDIADGVNE) is flexible loop. ATP is bound by residues 177 to 179 (DAK), 244 to 245 (RF), aspartate 253, 259 to 260 (RK), alanine 276, and lysine 280. Aspartate 253 is an L-methionine binding site. Residue lysine 284 participates in L-methionine binding.

Belongs to the AdoMet synthase family. Homotetramer; dimer of dimers. The cofactor is Mg(2+). It depends on K(+) as a cofactor.

The protein localises to the cytoplasm. It carries out the reaction L-methionine + ATP + H2O = S-adenosyl-L-methionine + phosphate + diphosphate. It participates in amino-acid biosynthesis; S-adenosyl-L-methionine biosynthesis; S-adenosyl-L-methionine from L-methionine: step 1/1. In terms of biological role, catalyzes the formation of S-adenosylmethionine (AdoMet) from methionine and ATP. The overall synthetic reaction is composed of two sequential steps, AdoMet formation and the subsequent tripolyphosphate hydrolysis which occurs prior to release of AdoMet from the enzyme. The polypeptide is S-adenosylmethionine synthase (Lactobacillus johnsonii (strain CNCM I-12250 / La1 / NCC 533)).